The chain runs to 217 residues: Protein-L-isoaspartate O-methyltransferase 2 (217 aa).

Residue Ser62 is part of the active site.

This sequence belongs to the methyltransferase superfamily. L-isoaspartyl/D-aspartyl protein methyltransferase family.

It is found in the cytoplasm. The catalysed reaction is [protein]-L-isoaspartate + S-adenosyl-L-methionine = [protein]-L-isoaspartate alpha-methyl ester + S-adenosyl-L-homocysteine. Its function is as follows. Catalyzes the methyl esterification of L-isoaspartyl residues in peptides and proteins that result from spontaneous decomposition of normal L-aspartyl and L-asparaginyl residues. It plays a role in the repair and/or degradation of damaged proteins. The polypeptide is Protein-L-isoaspartate O-methyltransferase 2 (Geotalea uraniireducens (strain Rf4) (Geobacter uraniireducens)).